The following is a 266-amino-acid chain: Small ribosomal subunit protein uS3 (266 aa).

Residues 39-107 (VREYLKKKLK…PVHVNIEEIR (69 aa)) form the KH type-2 domain. Positions 214–266 (PVVEEVTEDKRPRRNARPGDRRPRRDGEGGAPGARRGGPRRGAGKPEDGKTGE) are disordered. Basic and acidic residues-rich tracts occupy residues 230-241 (RPGDRRPRRDGE) and 257-266 (GKPEDGKTGE).

It belongs to the universal ribosomal protein uS3 family. In terms of assembly, part of the 30S ribosomal subunit. Forms a tight complex with proteins S10 and S14.

Binds the lower part of the 30S subunit head. Binds mRNA in the 70S ribosome, positioning it for translation. The protein is Small ribosomal subunit protein uS3 of Burkholderia mallei (strain NCTC 10247).